We begin with the raw amino-acid sequence, 68 residues long: uncharacterized protein (68 aa).

In terms of domain architecture, HMA spans 2 to 67 (KTITLNIKGI…VIEDAGFDAT (66 aa)). 2 residues coordinate a metal cation: C13 and C16.

This is an uncharacterized protein from Haemophilus influenzae (strain ATCC 51907 / DSM 11121 / KW20 / Rd).